The following is a 211-amino-acid chain: Pyruvate dehydrogenase E1 component subunit beta, mitochondrial (211 aa).

Y31 carries the post-translational modification Phosphotyrosine. Residues I48, A96, I97, D99, and N101 each contribute to the K(+) site.

As to quaternary structure, heterotetramer of two PDHA1 and two PDHB subunits. The heterotetramer interacts with DLAT, and is part of the multimeric pyruvate dehydrogenase complex that contains multiple copies of pyruvate dehydrogenase (E1), dihydrolipoamide acetyltransferase (DLAT, E2) and lipoamide dehydrogenase (DLD, E3). These subunits are bound to an inner core composed of about 48 DLAT and 12 PDHX molecules. Interacts with DLAT. Thiamine diphosphate serves as cofactor.

Its subcellular location is the mitochondrion matrix. It catalyses the reaction N(6)-[(R)-lipoyl]-L-lysyl-[protein] + pyruvate + H(+) = N(6)-[(R)-S(8)-acetyldihydrolipoyl]-L-lysyl-[protein] + CO2. The pyruvate dehydrogenase complex catalyzes the overall conversion of pyruvate to acetyl-CoA and CO(2), and thereby links the glycolytic pathway to the tricarboxylic cycle. The chain is Pyruvate dehydrogenase E1 component subunit beta, mitochondrial from Mesocricetus auratus (Golden hamster).